The primary structure comprises 347 residues: Isopentenyl-diphosphate delta-isomerase (347 aa).

The disordered stretch occupies residues 1–31 (MDESNSQFEKRKRDHIRIALDPRSQTDGQNG). Positions 8–20 (FEKRKRDHIRIAL) are enriched in basic and acidic residues. 11–12 (RK) contributes to the substrate binding site. Residues S72, 73-75 (SMT), S103, and N132 each bind FMN. 103-105 (SQR) provides a ligand contact to substrate. Substrate is bound at residue Q166. E167 is a binding site for Mg(2+). Residues K198, S223, T228, 279–281 (GVR), and 300–301 (AK) contribute to the FMN site.

This sequence belongs to the IPP isomerase type 2 family. In terms of assembly, homooctamer. Dimer of tetramers. It depends on FMN as a cofactor. Requires NADPH as cofactor. The cofactor is Mg(2+).

Its subcellular location is the cytoplasm. The catalysed reaction is isopentenyl diphosphate = dimethylallyl diphosphate. Involved in the biosynthesis of isoprenoids. Catalyzes the 1,3-allylic rearrangement of the homoallylic substrate isopentenyl (IPP) to its allylic isomer, dimethylallyl diphosphate (DMAPP). The sequence is that of Isopentenyl-diphosphate delta-isomerase from Bdellovibrio bacteriovorus (strain ATCC 15356 / DSM 50701 / NCIMB 9529 / HD100).